The chain runs to 401 residues: Argininosuccinate synthase (401 aa).

Position 8-16 (8-16 (AYSGGLDTS)) interacts with ATP. Y85 lines the L-citrulline pocket. G115 lines the ATP pocket. L-aspartate-binding residues include T117, N121, and D122. Position 121 (N121) interacts with L-citrulline. Residues R125, S173, E258, and Y270 each contribute to the L-citrulline site.

It belongs to the argininosuccinate synthase family. Type 1 subfamily. As to quaternary structure, homotetramer.

It localises to the cytoplasm. The enzyme catalyses L-citrulline + L-aspartate + ATP = 2-(N(omega)-L-arginino)succinate + AMP + diphosphate + H(+). It participates in amino-acid biosynthesis; L-arginine biosynthesis; L-arginine from L-ornithine and carbamoyl phosphate: step 2/3. This Staphylococcus aureus (strain bovine RF122 / ET3-1) protein is Argininosuccinate synthase.